Consider the following 153-residue polypeptide: ORM1-like protein 1 (153 aa).

The Cytoplasmic portion of the chain corresponds to 1 to 26 (MNVGVAHSEVNPNTRVMNSRGMWLTY). A run of 2 helical transmembrane segments spans residues 27–46 (ALGV…FSVP) and 47–67 (VAWT…LHAV). At 68-100 (KGTPFETPDQGKARLLTHWEQLDYGVQFTSSRK) the chain is on the cytoplasmic side. The helical transmembrane segment at 101–121 (FLTISPIILYFLASFYTKYDP) threads the bilayer. Topologically, residues 122 to 123 (TH) are extracellular. The chain crosses the membrane as a helical span at residues 124-144 (FFINTASLLSVLIPKLPQLHG). Residues 145–153 (VRIFGINKY) lie on the Cytoplasmic side of the membrane.

It belongs to the ORM family. As to quaternary structure, ceramide-sensitive subunit of the serine palmitoyltransferase (SPT) complex, which is also composed of SPTLC1, SPTLC2/3 and SPTSSA/B.

Its subcellular location is the endoplasmic reticulum membrane. Its function is as follows. Plays an essential role in the homeostatic regulation of sphingolipid de novo biosynthesis by modulating the activity of the serine palmitoyltransferase (SPT) in response to ceramide levels. When complexed to SPT, the binding of ceramides to its N-terminus stabilizes a conformation that block SPT substrate entry, hence preventing SPT catalytic activity. Through this mechanism, maintains ceramide levels at sufficient concentrations for the production of complex sphingolipids, but which prevents the accumulation of ceramides to levels that trigger apoptosis. The chain is ORM1-like protein 1 (ormdl1) from Xenopus laevis (African clawed frog).